A 196-amino-acid chain; its full sequence is Large ribosomal subunit protein mL66 (196 aa).

The transit peptide at 1 to 34 directs the protein to the mitochondrion; sequence MAALKALVSGCGRLLRGLLAGPAATSWSRLPARG.

This sequence belongs to the bacterial ribosomal protein bS18 family. Mitochondrion-specific ribosomal protein mL66 subfamily. Component of the mitochondrial large ribosomal subunit (mt-LSU). Mature mammalian 55S mitochondrial ribosomes consist of a small (28S) and a large (39S) subunit. The 28S small subunit contains a 12S ribosomal RNA (12S mt-rRNA) and 30 different proteins. The 39S large subunit contains a 16S rRNA (16S mt-rRNA), a copy of mitochondrial valine transfer RNA (mt-tRNA(Val)), which plays an integral structural role, and 52 different proteins. mL66 forms a zinc-binding site with uL10m.

Its subcellular location is the mitochondrion. In Homo sapiens (Human), this protein is Large ribosomal subunit protein mL66 (MRPS18A).